The chain runs to 421 residues: MRRVVITGTGMVSPLGCGTEVSWARLLTGDNAARKVTEFEVEDLPAKIACRIPFGDGSDGTFNADDWMEPKEQRKVDPFIVYAMAAADMALADAGWKPESDEDQISTGVLIGSGIGGLEGIVDAGYTLRDKGPRRISPFFIPGRLINLAAGQVSIRHKLRGPNHSVVTACSTGAHAIGDASRLIALGDADVMVAGGTESPICRISLAGFAACKALSTQHNDNPEKASRPYDADRDGFVMGEGAGIVVLEELEHARARGAKIYAEVIGYGLSGDAFHITAPSEDGEGAYRCMQMALKRAGVTAADIDYINAHGTSTMADTIELGAVERLVGDSASRISMSSTKSAIGHLLGAAGAVEAIFSALAIRDNIAPPTLNLDNPSVETKIDLVPHVARKREINVALSNSFGFGGTNASLILRRYTGH.

Positions 1 to 417 constitute a Ketosynthase family 3 (KS3) domain; the sequence is MRRVVITGTG…GTNASLILRR (417 aa). Catalysis depends on for beta-ketoacyl synthase activity residues C170, H311, and H347.

This sequence belongs to the thiolase-like superfamily. Beta-ketoacyl-ACP synthases family. Homodimer.

It carries out the reaction a fatty acyl-[ACP] + malonyl-[ACP] + H(+) = a 3-oxoacyl-[ACP] + holo-[ACP] + CO2. The enzyme catalyses (9Z)-hexadecenoyl-[ACP] + malonyl-[ACP] + H(+) = 3-oxo-(11Z)-octadecenoyl-[ACP] + holo-[ACP] + CO2. It participates in lipid metabolism; fatty acid biosynthesis. Its function is as follows. Involved in the type II fatty acid elongation cycle. Catalyzes the elongation of a wide range of acyl-ACP by the addition of two carbons from malonyl-ACP to an acyl acceptor. Can efficiently catalyze the conversion of palmitoleoyl-ACP (cis-hexadec-9-enoyl-ACP) to cis-vaccenoyl-ACP (cis-octadec-11-enoyl-ACP), an essential step in the thermal regulation of fatty acid composition. In Rhizobium meliloti (strain 1021) (Ensifer meliloti), this protein is 3-oxoacyl-[acyl-carrier-protein] synthase 2 (fabF).